The chain runs to 121 residues: Phosphoribosyl-ATP pyrophosphatase (121 aa).

It belongs to the PRA-PH family.

The protein localises to the cytoplasm. It carries out the reaction 1-(5-phospho-beta-D-ribosyl)-ATP + H2O = 1-(5-phospho-beta-D-ribosyl)-5'-AMP + diphosphate + H(+). It participates in amino-acid biosynthesis; L-histidine biosynthesis; L-histidine from 5-phospho-alpha-D-ribose 1-diphosphate: step 2/9. In Burkholderia cenocepacia (strain HI2424), this protein is Phosphoribosyl-ATP pyrophosphatase.